The following is a 384-amino-acid chain: S-adenosylmethionine synthase (384 aa).

His-15 provides a ligand contact to ATP. Asp-17 contacts Mg(2+). Glu-43 is a binding site for K(+). The L-methionine site is built by Glu-56 and Gln-99. A flexible loop region spans residues 99-109 (QSPDINQGVDR). ATP is bound by residues 164–166 (DAK), 230–231 (RF), Asp-239, 245–246 (RK), Ala-262, and Lys-266. Asp-239 is a binding site for L-methionine. Residue Lys-270 coordinates L-methionine.

This sequence belongs to the AdoMet synthase family. As to quaternary structure, homotetramer; dimer of dimers. It depends on Mg(2+) as a cofactor. K(+) is required as a cofactor.

Its subcellular location is the cytoplasm. The enzyme catalyses L-methionine + ATP + H2O = S-adenosyl-L-methionine + phosphate + diphosphate. Its pathway is amino-acid biosynthesis; S-adenosyl-L-methionine biosynthesis; S-adenosyl-L-methionine from L-methionine: step 1/1. Functionally, catalyzes the formation of S-adenosylmethionine (AdoMet) from methionine and ATP. The overall synthetic reaction is composed of two sequential steps, AdoMet formation and the subsequent tripolyphosphate hydrolysis which occurs prior to release of AdoMet from the enzyme. The sequence is that of S-adenosylmethionine synthase from Klebsiella pneumoniae subsp. pneumoniae (strain ATCC 700721 / MGH 78578).